Here is a 248-residue protein sequence, read N- to C-terminus: DNA repair protein RecO (248 aa).

This sequence belongs to the RecO family.

In terms of biological role, involved in DNA repair and RecF pathway recombination. This chain is DNA repair protein RecO, found in Bradyrhizobium sp. (strain BTAi1 / ATCC BAA-1182).